A 268-amino-acid chain; its full sequence is Phosphatidylglycerol--prolipoprotein diacylglyceryl transferase (268 aa).

The next 7 helical transmembrane spans lie at 21–41 (WYGI…GRFA), 54–74 (FAII…VFVL), 93–113 (GLAI…YLPM), 122–142 (ADVV…GNFF), 173–193 (VMHP…GILL), 203–223 (GVVF…IESI), and 236–256 (VAQL…AWFL). Arg137 lines the a 1,2-diacyl-sn-glycero-3-phospho-(1'-sn-glycerol) pocket.

It belongs to the Lgt family.

The protein localises to the cell membrane. It carries out the reaction L-cysteinyl-[prolipoprotein] + a 1,2-diacyl-sn-glycero-3-phospho-(1'-sn-glycerol) = an S-1,2-diacyl-sn-glyceryl-L-cysteinyl-[prolipoprotein] + sn-glycerol 1-phosphate + H(+). The protein operates within protein modification; lipoprotein biosynthesis (diacylglyceryl transfer). Catalyzes the transfer of the diacylglyceryl group from phosphatidylglycerol to the sulfhydryl group of the N-terminal cysteine of a prolipoprotein, the first step in the formation of mature lipoproteins. The protein is Phosphatidylglycerol--prolipoprotein diacylglyceryl transferase of Symbiobacterium thermophilum (strain DSM 24528 / JCM 14929 / IAM 14863 / T).